The following is a 61-amino-acid chain: Large ribosomal subunit protein uL29 (61 aa).

Belongs to the universal ribosomal protein uL29 family.

The sequence is that of Large ribosomal subunit protein uL29 from Xanthomonas euvesicatoria pv. vesicatoria (strain 85-10) (Xanthomonas campestris pv. vesicatoria).